The primary structure comprises 419 residues: Variant surface glycoprotein YnAT 1.1 (419 aa).

The signal sequence occupies residues 1-28; it reads MKRVLSNVLKAWIFTIVAFHNFSTSVTA. N-linked (GlcNAc...) asparagine glycans are attached at residues Asn82 and Asn358. Residues 369 to 405 are disordered; that stretch reads ESSRPPSTDANTSQKGPLQRPEKSGESSHLPSGSSHG. The span at 372–384 shows a compositional bias: polar residues; sequence RPPSTDANTSQKG. The N-linked (GlcNAc...) (high mannose) asparagine glycan is linked to Asn379. Residues 395–405 show a composition bias toward low complexity; the sequence is SSHLPSGSSHG. The GPI-anchor amidated serine moiety is linked to residue Ser400. Positions 401–419 are cleaved as a propeptide — removed in mature form; the sequence is GSSHGTKAIRSILHVALLM.

The protein localises to the cell membrane. Functionally, VSG forms a coat on the surface of the parasite. The trypanosome evades the immune response of the host by expressing a series of antigenically distinct VSGs from an estimated 1000 VSG genes. This chain is Variant surface glycoprotein YnAT 1.1, found in Trypanosoma congolense.